Reading from the N-terminus, the 305-residue chain is Ornithine carbamoyltransferase, anabolic (305 aa).

Carbamoyl phosphate contacts are provided by residues 53 to 56 (STRT), Gln-80, Arg-104, and 131 to 134 (HPCQ). L-ornithine-binding positions include Asn-162, Asp-219, and 223 to 224 (SM). Carbamoyl phosphate contacts are provided by residues 259–260 (CL) and Arg-287.

The protein belongs to the aspartate/ornithine carbamoyltransferase superfamily. OTCase family. Homotrimer.

Its subcellular location is the cytoplasm. It carries out the reaction carbamoyl phosphate + L-ornithine = L-citrulline + phosphate + H(+). It functions in the pathway amino-acid biosynthesis; L-arginine biosynthesis; L-arginine from L-ornithine and carbamoyl phosphate: step 1/3. Its function is as follows. Reversibly catalyzes the transfer of the carbamoyl group from carbamoyl phosphate (CP) to the N(epsilon) atom of ornithine (ORN) to produce L-citrulline, which is a substrate for argininosuccinate synthetase (ArgG) involved in the final step in arginine biosynthesis. This Pseudomonas aeruginosa (strain ATCC 15692 / DSM 22644 / CIP 104116 / JCM 14847 / LMG 12228 / 1C / PRS 101 / PAO1) protein is Ornithine carbamoyltransferase, anabolic.